The primary structure comprises 565 residues: MGDMQMSVVDPTWELLDPNPDIRALFLEFNDTFFWGQLSGVEVKWSARMTLCAGVCSYEGRGGLCSIRLSEPLLKLRPRKDLVETLLHEMIHALLFVTHNNKDHDSHGPEFCKHMERINGRTGANISVYHNFHDEVDEYRKHWWLCNGPCQKRKPYFGYVKRAMNRAPSSLDPWWADHQRTCGGSFVKVKEPENYPQKRKRKNDPTISEVNSSSHVKGKSNGVDIRTVIPFSGTGYKLFEPNKSDAPLKILNINPTKDKAAVPLLNHTPPSTNINGTFLTNKIGSAKSTPAQSILTKVSVANTKVFINLNGSPIKLPSGSKNKSHQISSKQKSVLPFFKMQKDNSFDLTLPSPSIQSTSQKPQKDISFGFTLPSQSFPSTSPGSNSENKEPLYKKLQMNDRESFIIHSGNKTNVNDNKSCTGPAATTASGLNHTIKVSCPVCGTEVLECKINDHLDTCTSSGPQKDILLDVSLPLQSFPSTSQGSNSAIKEPLYKKLQINDKDSFIIHSGNKTNVNDNKSCTRPAATTASGFNHTIKVCCPVCGTDVLQDKINDHLDTCLQNCNT.

The SprT-like domain occupies arginine 23–histidine 130. Position 88 (histidine 88) interacts with Zn(2+). Residue glutamate 89 is part of the active site. Positions 92 and 107 each coordinate Zn(2+). Residues glutamate 191–lysine 219 form a disordered region. Over residues proline 205–histidine 215 the composition is skewed to polar residues. An SHP-box motif is present at residues phenylalanine 231–phenylalanine 239. A PIP-box motif is present at residues serine 288–leucine 295. Residues threonine 349–lysine 389 are disordered. Polar residues-rich tracts occupy residues proline 351–lysine 361 and leucine 372–serine 386. The UBZ4-type 1 zinc-finger motif lies at lysine 436 to proline 463. Positions 439, 442, 454, and 458 each coordinate Zn(2+). A Nuclear localization signal motif is present at residues glutamine 476–isoleucine 499. The UBZ4-type 2 zinc finger occupies lysine 537–asparagine 564. Residues cysteine 540, cysteine 543, histidine 555, and cysteine 559 each coordinate Zn(2+).

The protein belongs to the Spartan family. Homodimer. Requires Zn(2+) as cofactor. Post-translationally, autocatalytically cleaved in response to double-stranded DNA-binding: autocatalytic cleavage takes place in trans and leads to inactivation.

The protein localises to the nucleus. It is found in the chromosome. Its activity is regulated as follows. DNA-binding activates the protease activity: single-stranded DNA-binding specifically activates ability to cleave covalent DNA-protein cross-links (DPCs). In contrast, double-stranded DNA-binding specifically activates autocatalytic cleavage, and subsequent inactivation. Functionally, DNA-dependent metalloendopeptidase that mediates the proteolytic cleavage of covalent DNA-protein cross-links (DPCs) during DNA synthesis, thereby playing a key role in maintaining genomic integrity. DPCs are highly toxic DNA lesions that interfere with essential chromatin transactions, such as replication and transcription, and which are induced by reactive agents, such as UV light or formaldehyde. Associates with the DNA replication machinery and specifically removes DPCs during DNA synthesis. Catalyzes proteolytic cleavage of the hmces DNA-protein cross-link following unfolding by the brip1/fancj helicase. Acts as a pleiotropic protease for DNA-binding proteins cross-linked with DNA, such as top1, top2a, histones H3 and H4. Mediates degradation of DPCs that are not ubiquitinated, while it is not able to degrade ubiquitinated DPCs. SPRTN activation requires polymerase collision with DPCs followed by helicase bypass of DPCs. May also act as a 'reader' of ubiquitinated pcna: facilitates chromatin association of rad18 and is required for efficient pcna monoubiquitination, promoting a feed-forward loop to enhance pcna ubiquitination and translesion DNA synthesis. Acts as a regulator of translesion DNA synthesis by recruiting vcp/p97 to sites of DNA damage. In Xenopus laevis (African clawed frog), this protein is DNA-dependent metalloprotease SPRTN.